The primary structure comprises 315 residues: Thymidylate synthase (315 aa).

DUMP is bound by residues R29 and 156-157 (RR). C176 (nucleophile) is an active-site residue. DUMP-binding positions include 213–216 (RSCD), N224, and 254–256 (HVY). D216 is a binding site for (6R)-5,10-methylene-5,6,7,8-tetrahydrofolate.

This sequence belongs to the thymidylate synthase family. Homodimer.

The catalysed reaction is dUMP + (6R)-5,10-methylene-5,6,7,8-tetrahydrofolate = 7,8-dihydrofolate + dTMP. It participates in pyrimidine metabolism; dTTP biosynthesis. The chain is Thymidylate synthase (TMP1) from Candida albicans (strain SC5314 / ATCC MYA-2876) (Yeast).